Consider the following 1252-residue polypeptide: Plasma membrane calcium-transporting ATPase mca-1 (1252 aa).

Residues 1–121 lie on the Cytoplasmic side of the membrane; it reads MQKSQNVTAV…VRLVLDACKD (121 aa). A helical membrane pass occupies residues 122 to 142; that stretch reads PTLVILVLSGFINLALSFYEP. At 143–180 the chain is on the extracellular side; the sequence is TSAAEDATQHLVNATTAAILANGTFMSTTEAPSEGHGT. N-linked (GlcNAc...) asparagine glycans are attached at residues Asn-155 and Asn-164. Residues 181 to 201 traverse the membrane as a helical segment; sequence AWIEGVAILLCVIVVVLVTAV. The Cytoplasmic segment spans residues 202–376; that stretch reads NDYSKERQFR…KSVLQAKLSK (175 aa). The interval 330–361 is disordered; it reads DDSTSTSSSSSSSSSSSGSSSNGSSDSSKSGD. Over residues 333-357 the composition is skewed to low complexity; the sequence is TSTSSSSSSSSSSSGSSSNGSSDSS. Residues 377–397 form a helical membrane-spanning segment; sequence LALQIIYCGTTIAIIALIVLV. At 398–422 the chain is on the extracellular side; sequence TRFCLDHYVFEKNEFSLVDIQMFVK. The helical transmembrane segment at 423-443 threads the bilayer; that stretch reads FFIIAVTILVISIPEGLPLAI. Ca(2+) contacts are provided by Val-432, Ile-435, and Glu-437. Residues 444–879 lie on the Cytoplasmic side of the membrane; sequence ALALTYSVRK…GRNVYDSISK (436 aa). Asp-479 serves as the catalytic 4-aspartylphosphate intermediate. Residues Asp-479 and Thr-481 each coordinate Mg(2+). The ATP site is built by Thr-481, Glu-553, Lys-612, Thr-733, Gly-734, Asp-735, Arg-792, and Lys-798. Asp-822 is a Mg(2+) binding site. Position 825 (Asn-825) interacts with ATP. Residues 880–900 traverse the membrane as a helical segment; the sequence is FLQFQLTVNVVAVITAFVGAV. Position 888 (Asn-888) interacts with Ca(2+). Over 901-908 the chain is Extracellular; that stretch reads TVSDSPLK. A helical transmembrane segment spans residues 909-929; sequence AVHMLWINLIMDTLASLALAT. Ca(2+)-binding residues include Asn-916 and Asp-920. The Cytoplasmic portion of the chain corresponds to 930–960; it reads EQPTDELLERKPYGRKKSLISRTMVKNILCH. Residues 961–981 traverse the membrane as a helical segment; it reads ALYQLIIIFVIFFYGDTIFGI. Residues 982 to 989 lie on the Extracellular side of the membrane; that stretch reads KTGLYAPL. Residues 990 to 1010 form a helical membrane-spanning segment; sequence FAPPSQHFTLVFNAFVMMTVF. Residues 1011 to 1035 lie on the Cytoplasmic side of the membrane; that stretch reads NEINARKVHGERNVFKGLASNRVFC. Residues 1036-1056 form a helical membrane-spanning segment; the sequence is VIWVTTFIAQIIIVQFGGAWF. Residues 1057–1065 lie on the Extracellular side of the membrane; the sequence is STAPLTLQQ. A helical transmembrane segment spans residues 1066–1086; the sequence is WIVCLVLGFSTLIWGQIVATI. The Cytoplasmic portion of the chain corresponds to 1087-1252; the sequence is PSKKLPKAWK…NVDMEDIELN (166 aa). Positions 1124–1142 are calmodulin-binding subdomain A; sequence LRRSGKSLWVRGMFIIGNH. A calmodulin-binding subdomain B region spans residues 1143 to 1152; the sequence is LRVLRAFGME. A disordered region spans residues 1181–1252; that stretch reads YRHQKHQEKK…NVDMEDIELN (72 aa).

Belongs to the cation transport ATPase (P-type) (TC 3.A.3) family. Type IIB subfamily. As to quaternary structure, interacts with calmodulin.

It localises to the cell membrane. The enzyme catalyses Ca(2+)(in) + ATP + H2O = Ca(2+)(out) + ADP + phosphate + H(+). In terms of biological role, catalyzes the hydrolysis of ATP coupled with the transport of calcium across a membrane. The sequence is that of Plasma membrane calcium-transporting ATPase mca-1 from Caenorhabditis elegans.